The sequence spans 439 residues: GTPase Der (439 aa).

2 EngA-type G domains span residues 4-169 (AMVS…PQEE) and 177-352 (IKIA…EEYN). GTP contacts are provided by residues 10 to 17 (GRPNVGKS), 57 to 61 (DTGGL), 120 to 123 (NKVD), 183 to 190 (GKPNVGKS), 230 to 234 (DTAGI), and 295 to 298 (NKWD). One can recognise a KH-like domain in the interval 353-437 (KRITTGLLNN…PVVISTRKRG (85 aa)).

This sequence belongs to the TRAFAC class TrmE-Era-EngA-EngB-Septin-like GTPase superfamily. EngA (Der) GTPase family. In terms of assembly, associates with the 50S ribosomal subunit.

Functionally, GTPase that plays an essential role in the late steps of ribosome biogenesis. This chain is GTPase Der, found in Thermoanaerobacter pseudethanolicus (strain ATCC 33223 / 39E) (Clostridium thermohydrosulfuricum).